The primary structure comprises 89 residues: Small ribosomal subunit protein uS15 (89 aa).

This sequence belongs to the universal ribosomal protein uS15 family. As to quaternary structure, part of the 30S ribosomal subunit. Forms a bridge to the 50S subunit in the 70S ribosome, contacting the 23S rRNA.

In terms of biological role, one of the primary rRNA binding proteins, it binds directly to 16S rRNA where it helps nucleate assembly of the platform of the 30S subunit by binding and bridging several RNA helices of the 16S rRNA. Forms an intersubunit bridge (bridge B4) with the 23S rRNA of the 50S subunit in the ribosome. This is Small ribosomal subunit protein uS15 from Streptococcus pyogenes serotype M2 (strain MGAS10270).